Here is a 74-residue protein sequence, read N- to C-terminus: VLIIAVLFLTACQLTTAETSSRGEQKHRAPRSTDKNSRMTKRCTPGGEACDATTNCCFLTCNLATNKCRSPNFP.

Residues 1-17 (VLIIAVLFLTACQLTTA) form the signal peptide. A disordered region spans residues 17–41 (AETSSRGEQKHRAPRSTDKNSRMTK). The propeptide occupies 18–40 (ETSSRGEQKHRAPRSTDKNSRMT). Basic and acidic residues predominate over residues 21 to 37 (SRGEQKHRAPRSTDKNS). Disulfide bonds link C43-C57, C50-C61, and C56-C68.

This sequence belongs to the conotoxin O1 superfamily. Expressed by the venom duct.

It localises to the secreted. This chain is Conotoxin AbVIL, found in Conus abbreviatus (Abbreviated cone).